A 214-amino-acid polypeptide reads, in one-letter code: Osteoclast-stimulating factor 1 (214 aa).

N-acetylserine is present on Ser-2. Positions 12-71 constitute an SH3 domain; it reads GQVKVFRALYTFEPRTPDELYFEEGDIIYITDMSDTSWWKGTCKGRTGLIPSNYVAEQAE. 3 ANK repeats span residues 72 to 101, 105 to 135, and 139 to 168; these read SIDNPLHEAAKRGNLSWLRECLDNRVGVNG, AGSTALYWACHGGHKDIVEVLFTQPNVELNQ, and LGDTALHAAAWKGYADIVQLLLAKGARTDL. Thr-200 bears the Phosphothreonine mark. 2 positions are modified to phosphoserine: Ser-202 and Ser-213.

In terms of assembly, interacts with SRC and SMN1. Interacts with FASLG.

Its subcellular location is the cytoplasm. Induces bone resorption, acting probably through a signaling cascade which results in the secretion of factor(s) enhancing osteoclast formation and activity. The sequence is that of Osteoclast-stimulating factor 1 (Ostf1) from Rattus norvegicus (Rat).